Consider the following 486-residue polypeptide: N-succinylglutamate 5-semialdehyde dehydrogenase (486 aa).

NAD(+) is bound at residue 220–225; the sequence is GSSRTG. Residues Glu243 and Cys277 contribute to the active site.

It belongs to the aldehyde dehydrogenase family. AstD subfamily.

It carries out the reaction N-succinyl-L-glutamate 5-semialdehyde + NAD(+) + H2O = N-succinyl-L-glutamate + NADH + 2 H(+). The protein operates within amino-acid degradation; L-arginine degradation via AST pathway; L-glutamate and succinate from L-arginine: step 4/5. Its function is as follows. Catalyzes the NAD-dependent reduction of succinylglutamate semialdehyde into succinylglutamate. In Shewanella baltica (strain OS185), this protein is N-succinylglutamate 5-semialdehyde dehydrogenase.